The following is a 190-amino-acid chain: Transcription factor E (190 aa).

The HTH TFE/IIEalpha-type domain occupies 4 to 87 (KNKALLEIAK…YWHLETKRLP (84 aa)). A disordered region spans residues 170-190 (PSPKKEKKKTRAKAKRKTRKK). Positions 174 to 190 (KEKKKTRAKAKRKTRKK) are enriched in basic residues.

This sequence belongs to the TFE family. As to quaternary structure, monomer. Interaction with RNA polymerase subunits RpoF and RpoE is necessary for Tfe stimulatory transcription activity. Able to interact with Tbp and RNA polymerase in the absence of DNA promoter. Interacts both with the preinitiation and elongation complexes.

In terms of biological role, transcription factor that plays a role in the activation of archaeal genes transcribed by RNA polymerase. Facilitates transcription initiation by enhancing TATA-box recognition by TATA-box-binding protein (Tbp), and transcription factor B (Tfb) and RNA polymerase recruitment. Not absolutely required for transcription in vitro, but particularly important in cases where Tbp or Tfb function is not optimal. It dynamically alters the nucleic acid-binding properties of RNA polymerases by stabilizing the initiation complex and destabilizing elongation complexes. Seems to translocate with the RNA polymerase following initiation and acts by binding to the non template strand of the transcription bubble in elongation complexes. The chain is Transcription factor E from Pyrococcus abyssi (strain GE5 / Orsay).